A 346-amino-acid polypeptide reads, in one-letter code: Biotin synthase (346 aa).

The span at 1–12 (MPDTATVSSESE) shows a compositional bias: polar residues. The segment at 1 to 21 (MPDTATVSSESEFSGHAHVAA) is disordered. The region spanning 64–292 (NKVQLCSLLS…QSMVRLSAGR (229 aa)) is the Radical SAM core domain. Residues Cys-79, Cys-83, and Cys-86 each coordinate [4Fe-4S] cluster. 4 residues coordinate [2Fe-2S] cluster: Cys-123, Cys-155, Cys-215, and Arg-287.

The protein belongs to the radical SAM superfamily. Biotin synthase family. Homodimer. The cofactor is [4Fe-4S] cluster. [2Fe-2S] cluster is required as a cofactor.

It catalyses the reaction (4R,5S)-dethiobiotin + (sulfur carrier)-SH + 2 reduced [2Fe-2S]-[ferredoxin] + 2 S-adenosyl-L-methionine = (sulfur carrier)-H + biotin + 2 5'-deoxyadenosine + 2 L-methionine + 2 oxidized [2Fe-2S]-[ferredoxin]. The protein operates within cofactor biosynthesis; biotin biosynthesis; biotin from 7,8-diaminononanoate: step 2/2. Catalyzes the conversion of dethiobiotin (DTB) to biotin by the insertion of a sulfur atom into dethiobiotin via a radical-based mechanism. The protein is Biotin synthase of Myxococcus xanthus (strain DK1622).